The primary structure comprises 744 residues: Phosphoribosylformylglycinamidine synthase subunit PurL (744 aa).

The active site involves H45. Residues Y48 and K87 each coordinate ATP. Residue E89 coordinates Mg(2+). Residues 90 to 93 (SHNH) and R112 each bind substrate. Catalysis depends on H91, which acts as the Proton acceptor. Position 113 (D113) interacts with Mg(2+). Substrate is bound at residue Q236. Residue D264 coordinates Mg(2+). 308 to 310 (ESQ) is a substrate binding site. 2 residues coordinate ATP: N492 and G529. N530 contributes to the Mg(2+) binding site. Substrate is bound at residue S532.

It belongs to the FGAMS family. As to quaternary structure, monomer. Part of the FGAM synthase complex composed of 1 PurL, 1 PurQ and 2 PurS subunits.

The protein localises to the cytoplasm. It catalyses the reaction N(2)-formyl-N(1)-(5-phospho-beta-D-ribosyl)glycinamide + L-glutamine + ATP + H2O = 2-formamido-N(1)-(5-O-phospho-beta-D-ribosyl)acetamidine + L-glutamate + ADP + phosphate + H(+). It functions in the pathway purine metabolism; IMP biosynthesis via de novo pathway; 5-amino-1-(5-phospho-D-ribosyl)imidazole from N(2)-formyl-N(1)-(5-phospho-D-ribosyl)glycinamide: step 1/2. Part of the phosphoribosylformylglycinamidine synthase complex involved in the purines biosynthetic pathway. Catalyzes the ATP-dependent conversion of formylglycinamide ribonucleotide (FGAR) and glutamine to yield formylglycinamidine ribonucleotide (FGAM) and glutamate. The FGAM synthase complex is composed of three subunits. PurQ produces an ammonia molecule by converting glutamine to glutamate. PurL transfers the ammonia molecule to FGAR to form FGAM in an ATP-dependent manner. PurS interacts with PurQ and PurL and is thought to assist in the transfer of the ammonia molecule from PurQ to PurL. This is Phosphoribosylformylglycinamidine synthase subunit PurL from Erythrobacter litoralis (strain HTCC2594).